The sequence spans 120 residues: Putative monooxygenase GME11364 (120 aa).

The ABM domain occupies 9–99 (VSVHIRLTVD…ILLKPHEVEL (91 aa)).

Belongs to the LsrG family.

Its pathway is secondary metabolite biosynthesis. Putative monooxygenase; part of the gene cluster that mediates the biosynthesis of dibenzodioxocinones such as pestalotiollide B, a novel class of inhibitors against cholesterol ester transfer protein (CEPT). The biosynthesis initiates from condensation of acetate and malonate units catalyzed by the non-reducing PKS pks8/GME11356. Pks8/GME11356 lacks a thioesterase (TE) domain, which is important to the cyclizing of the third ring of atrochrysone carboxylic acid, and the esterase GME11355 might play the role of TE and catalyzes the cyclization reaction of the C ring. The lactamase-like protein GME11357 (or other beta-lactamases in Pestalotiopsis microspora) probably hydrolyzes the thioester bond between the ACP of pks8/GME11356 and the intermediate to release atrochrysone carboxylic acid, which is spontaneously dehydrates to form endocrocin anthrone. Endocrocin anthrone is further converted to emodin via the endocrocin intermediate. Emodin is then oxidized by several enzymes such as the Baeyer-Villiger oxidase GME11358, the oxidoreductase GME11367, the short chain dehydrogenase/reductase GME11373, as well as by other oxidoreductases from the cluster, to modify the A and C rings and open the B ring, and finally yield monodictyphenone. The prenyltransferase GME11375 may catalyze the addition reaction between the C5 side chains and the carbon bone of dibenzodioxocinones. The remaining biochemical reactions to the final product dibenzodioxocinones should be methylation catalyzed by methyltransferase GME11366 and reduction and lactonization reaction catalyzed by a series of oxidordeuctases. This is Putative monooxygenase GME11364 from Pestalotiopsis microspora.